An 894-amino-acid polypeptide reads, in one-letter code: Leucine--tRNA ligase, mitochondrial (894 aa).

Residues 1–9 constitute a mitochondrion transit peptide; it reads MLPRPSSRF. The 'HIGH' region motif lies at 56–66; sequence PYPSGVLHIGH. Positions 646 to 650 match the 'KMSKS' region motif; sequence KMSKS. Lys649 contributes to the ATP binding site.

The protein belongs to the class-I aminoacyl-tRNA synthetase family.

Its subcellular location is the mitochondrion matrix. It carries out the reaction tRNA(Leu) + L-leucine + ATP = L-leucyl-tRNA(Leu) + AMP + diphosphate. The chain is Leucine--tRNA ligase, mitochondrial (NAM2) from Saccharomyces paradoxus (Yeast).